We begin with the raw amino-acid sequence, 286 residues long: MVAFVKARRQIAGVKESKSLLPLALIGISLLYVGLIIIIPAANVAVQAFSEGLSGFIKNLGDRNLQEAIRLTLLMGVISVPLNTLFGLAAAFAIARKQFPGKSLLLSVIDLPFSISPVVAGLMIVLLYGRNGWLGPLLESNDIKIIFAWPGMALATIFVSMPFVAREVIPNLEEIGTDAEEAASTLGANGWQTFWRVTLPSIKWSMLYGVVLTTARALGEFGAVSVVSGSITGKTQTLPLFVEEAYKQYQTTLSYTAALLLGGISLVTLVLKALLEARTGRQSRIH.

Transmembrane regions (helical) follow at residues 20–40 (LLPL…IIIP), 74–94 (LMGV…AFAI), 108–128 (VIDL…VLLY), 145–165 (IIFA…PFVA), 207–227 (LYGV…VSVV), and 255–275 (YTAA…KALL). One can recognise an ABC transmembrane type-1 domain in the interval 69–272 (IRLTLLMGVI…GISLVTLVLK (204 aa)).

The protein belongs to the binding-protein-dependent transport system permease family. CysTW subfamily. The complex is composed of two ATP-binding proteins (CysA), two transmembrane proteins (CysT and CysW) and a solute-binding protein (CysP).

Its subcellular location is the cell inner membrane. Part of the ABC transporter complex CysAWTP (TC 3.A.1.6.1) involved in sulfate/thiosulfate import. Probably responsible for the translocation of the substrate across the membrane. In Synechococcus elongatus (strain ATCC 33912 / PCC 7942 / FACHB-805) (Anacystis nidulans R2), this protein is Sulfate transport system permease protein CysW (cysW).